A 207-amino-acid chain; its full sequence is Segregation and condensation protein B (207 aa).

The protein belongs to the ScpB family. In terms of assembly, homodimer. Homodimerization may be required to stabilize the binding of ScpA to the Smc head domains. Component of a cohesin-like complex composed of ScpA, ScpB and the Smc homodimer, in which ScpA and ScpB bind to the head domain of Smc. The presence of the three proteins is required for the association of the complex with DNA.

The protein resides in the cytoplasm. In terms of biological role, participates in chromosomal partition during cell division. May act via the formation of a condensin-like complex containing Smc and ScpA that pull DNA away from mid-cell into both cell halves. The protein is Segregation and condensation protein B of Mycoplasma genitalium (strain ATCC 33530 / DSM 19775 / NCTC 10195 / G37) (Mycoplasmoides genitalium).